A 323-amino-acid polypeptide reads, in one-letter code: MRTATLYRYSVPMEAGVILRHQRLKSRDGLLVKLQQGELSGWGEIAPLPEFSQETLDQAQVAAECWLQHWVSGVESDDSVLPSVAFGLSCAQAELKQTLPLSADYRKAPLCTGDPDELFAVLQALPGEKVAKVKVGLYEAVRDGMIVNVLLEALPDLTLRLDANRSWSRAKADGFAKYVNPALRSRIAFLEEPCKTRAESREFARDTGIAIAWDESVREADFQVEAEPGVAAIVIKPTLVGSLARCQQLVQQAHQAGLVAVISSSIESSLGLTQLARLAAWLTPATVPGLDTLDLMQAQVVRPWPDSPLPLITTEQLGVVWHR.

The active-site Proton donor is the Lys-134. Mg(2+) is bound by residues Asp-162, Glu-191, and Asp-214. Lys-236 serves as the catalytic Proton acceptor.

The protein belongs to the mandelate racemase/muconate lactonizing enzyme family. MenC type 1 subfamily. It depends on a divalent metal cation as a cofactor.

The catalysed reaction is (1R,6R)-6-hydroxy-2-succinyl-cyclohexa-2,4-diene-1-carboxylate = 2-succinylbenzoate + H2O. It participates in quinol/quinone metabolism; 1,4-dihydroxy-2-naphthoate biosynthesis; 1,4-dihydroxy-2-naphthoate from chorismate: step 4/7. Its pathway is quinol/quinone metabolism; menaquinone biosynthesis. Functionally, converts 2-succinyl-6-hydroxy-2,4-cyclohexadiene-1-carboxylate (SHCHC) to 2-succinylbenzoate (OSB). The chain is o-succinylbenzoate synthase from Yersinia pseudotuberculosis serotype O:3 (strain YPIII).